The following is a 201-amino-acid chain: FMN-dependent NADH:quinone oxidoreductase (201 aa).

FMN contacts are provided by residues Ser-10, 16–18 (SQS), 96–99 (MYNF), and 140–143 (SRGG).

Belongs to the azoreductase type 1 family. As to quaternary structure, homodimer. It depends on FMN as a cofactor.

It carries out the reaction 2 a quinone + NADH + H(+) = 2 a 1,4-benzosemiquinone + NAD(+). The catalysed reaction is N,N-dimethyl-1,4-phenylenediamine + anthranilate + 2 NAD(+) = 2-(4-dimethylaminophenyl)diazenylbenzoate + 2 NADH + 2 H(+). Functionally, quinone reductase that provides resistance to thiol-specific stress caused by electrophilic quinones. Its function is as follows. Also exhibits azoreductase activity. Catalyzes the reductive cleavage of the azo bond in aromatic azo compounds to the corresponding amines. This is FMN-dependent NADH:quinone oxidoreductase from Yersinia pseudotuberculosis serotype O:1b (strain IP 31758).